Consider the following 593-residue polypeptide: 2-succinyl-5-enolpyruvyl-6-hydroxy-3-cyclohexene-1-carboxylate synthase (593 aa).

Belongs to the TPP enzyme family. MenD subfamily. In terms of assembly, homodimer. The cofactor is Mg(2+). It depends on Mn(2+) as a cofactor. Thiamine diphosphate serves as cofactor.

The enzyme catalyses isochorismate + 2-oxoglutarate + H(+) = 5-enolpyruvoyl-6-hydroxy-2-succinyl-cyclohex-3-ene-1-carboxylate + CO2. It participates in quinol/quinone metabolism; 1,4-dihydroxy-2-naphthoate biosynthesis; 1,4-dihydroxy-2-naphthoate from chorismate: step 2/7. The protein operates within quinol/quinone metabolism; menaquinone biosynthesis. Its function is as follows. Catalyzes the thiamine diphosphate-dependent decarboxylation of 2-oxoglutarate and the subsequent addition of the resulting succinic semialdehyde-thiamine pyrophosphate anion to isochorismate to yield 2-succinyl-5-enolpyruvyl-6-hydroxy-3-cyclohexene-1-carboxylate (SEPHCHC). In Pelodictyon phaeoclathratiforme (strain DSM 5477 / BU-1), this protein is 2-succinyl-5-enolpyruvyl-6-hydroxy-3-cyclohexene-1-carboxylate synthase.